Consider the following 197-residue polypeptide: Elongation factor Ts (197 aa).

Residues 81 to 84 (TDFV) are involved in Mg(2+) ion dislocation from EF-Tu.

It belongs to the EF-Ts family.

It localises to the cytoplasm. Associates with the EF-Tu.GDP complex and induces the exchange of GDP to GTP. It remains bound to the aminoacyl-tRNA.EF-Tu.GTP complex up to the GTP hydrolysis stage on the ribosome. In Persephonella marina (strain DSM 14350 / EX-H1), this protein is Elongation factor Ts.